Consider the following 248-residue polypeptide: 3-deoxy-manno-octulosonate cytidylyltransferase (248 aa).

This sequence belongs to the KdsB family.

It localises to the cytoplasm. It carries out the reaction 3-deoxy-alpha-D-manno-oct-2-ulosonate + CTP = CMP-3-deoxy-beta-D-manno-octulosonate + diphosphate. The protein operates within nucleotide-sugar biosynthesis; CMP-3-deoxy-D-manno-octulosonate biosynthesis; CMP-3-deoxy-D-manno-octulosonate from 3-deoxy-D-manno-octulosonate and CTP: step 1/1. It functions in the pathway bacterial outer membrane biogenesis; lipopolysaccharide biosynthesis. Activates KDO (a required 8-carbon sugar) for incorporation into bacterial lipopolysaccharide in Gram-negative bacteria. This Shigella dysenteriae serotype 1 (strain Sd197) protein is 3-deoxy-manno-octulosonate cytidylyltransferase.